Here is a 90-residue protein sequence, read N- to C-terminus: Small ribosomal subunit protein bS18 (90 aa).

The tract at residues 1 to 24 is disordered; that stretch reads MKPMRQKPGRGQGNKSISNALASK.

The protein belongs to the bacterial ribosomal protein bS18 family. In terms of assembly, part of the 30S ribosomal subunit. Forms a tight heterodimer with protein bS6.

Binds as a heterodimer with protein bS6 to the central domain of the 16S rRNA, where it helps stabilize the platform of the 30S subunit. In Chlorobium phaeovibrioides (strain DSM 265 / 1930) (Prosthecochloris vibrioformis (strain DSM 265)), this protein is Small ribosomal subunit protein bS18.